We begin with the raw amino-acid sequence, 269 residues long: Glutamate racemase (269 aa).

Residues 7–8 (DS) and 39–40 (YG) each bind substrate. The Proton donor/acceptor role is filled by C70. 71–72 (NT) is a binding site for substrate. The active-site Proton donor/acceptor is the C194. 195-196 (TH) provides a ligand contact to substrate.

This sequence belongs to the aspartate/glutamate racemases family.

The enzyme catalyses L-glutamate = D-glutamate. The protein operates within cell wall biogenesis; peptidoglycan biosynthesis. Provides the (R)-glutamate required for cell wall biosynthesis. This chain is Glutamate racemase, found in Ruegeria pomeroyi (strain ATCC 700808 / DSM 15171 / DSS-3) (Silicibacter pomeroyi).